A 145-amino-acid chain; its full sequence is Hydrophobin-like protein 1 (145 aa).

The N-terminal stretch at Met-1–Ala-20 is a signal peptide. The N-linked (GlcNAc...) asparagine glycan is linked to Asn-36. 4 cysteine pairs are disulfide-bonded: Cys-61-Cys-121, Cys-71-Cys-113, Cys-72-Cys-104, and Cys-122-Cys-139.

It is found in the secreted. The protein localises to the cell wall. Aerial growth, conidiation, and dispersal of filamentous fungi in the environment rely upon a capability of their secreting small amphipathic proteins called hydrophobins (HPBs) with low sequence identity. Class I can self-assemble into an outermost layer of rodlet bundles on aerial cell surfaces, conferring cellular hydrophobicity that supports fungal growth, development and dispersal; whereas Class II form highly ordered films at water-air interfaces through intermolecular interactions but contribute nothing to the rodlet structure. In Botryotinia fuckeliana, hydrophobins are not involved in conferring surface hydrophobicity to conidia and aerial hyphae and their function in sclerotia and fruiting bodies remains to be investigated. In Botryotinia fuckeliana (strain B05.10) (Noble rot fungus), this protein is Hydrophobin-like protein 1.